The primary structure comprises 250 residues: MNRPDLVLLHGWGLGPQVWSALTPYLPAGLRVRTPALPGHGGTPARGPTLEAWSDALLPELPDDAVVCGWSLGGLVALDLARRHPHKVARLVLIGTSPCFVTRPENAAAPWPYGLAASTVTGFIDDFAHDPAATLRRFVALQALGDARRRTVSNALNAALANLEQCRPAALGAGLELLADTDWRAALDDVRQPVQLIHGAGDALMPLAAAEWLATRLPDARLARFDDCGHAPFLSHPEDCAVLIEDVVRG.

Residues Trp-12, 71 to 72 (SL), and 138 to 142 (FVALQ) contribute to the substrate site. The Nucleophile role is filled by Ser-71. Residues Asp-202 and His-230 contribute to the active site. His-230 is a binding site for substrate.

It belongs to the AB hydrolase superfamily. Carboxylesterase BioH family. As to quaternary structure, monomer.

It localises to the cytoplasm. It carries out the reaction 6-carboxyhexanoyl-[ACP] methyl ester + H2O = 6-carboxyhexanoyl-[ACP] + methanol + H(+). It participates in cofactor biosynthesis; biotin biosynthesis. Its function is as follows. The physiological role of BioH is to remove the methyl group introduced by BioC when the pimeloyl moiety is complete. It allows to synthesize pimeloyl-ACP via the fatty acid synthetic pathway through the hydrolysis of the ester bonds of pimeloyl-ACP esters. In Aromatoleum aromaticum (strain DSM 19018 / LMG 30748 / EbN1) (Azoarcus sp. (strain EbN1)), this protein is Pimeloyl-[acyl-carrier protein] methyl ester esterase.